Here is a 218-residue protein sequence, read N- to C-terminus: LexA repressor (218 aa).

Positions 28-48 (RAEIAAEFGFSSPNAAEEHLR) form a DNA-binding region, H-T-H motif. Active-site for autocatalytic cleavage activity residues include Ser136 and Lys173.

Belongs to the peptidase S24 family. As to quaternary structure, homodimer.

The enzyme catalyses Hydrolysis of Ala-|-Gly bond in repressor LexA.. Functionally, represses a number of genes involved in the response to DNA damage (SOS response), including recA and lexA. In the presence of single-stranded DNA, RecA interacts with LexA causing an autocatalytic cleavage which disrupts the DNA-binding part of LexA, leading to derepression of the SOS regulon and eventually DNA repair. The sequence is that of LexA repressor from Cupriavidus pinatubonensis (strain JMP 134 / LMG 1197) (Cupriavidus necator (strain JMP 134)).